The chain runs to 274 residues: Large ribosomal subunit protein uL2 (274 aa).

The segment at 221–274 (RGTAMNPVDHPHGGGEGRNFGKHPVTPWGVQTKGKKTRSNKRTDKFIVRRRSKK) is disordered.

The protein belongs to the universal ribosomal protein uL2 family. Part of the 50S ribosomal subunit. Forms a bridge to the 30S subunit in the 70S ribosome.

In terms of biological role, one of the primary rRNA binding proteins. Required for association of the 30S and 50S subunits to form the 70S ribosome, for tRNA binding and peptide bond formation. It has been suggested to have peptidyltransferase activity; this is somewhat controversial. Makes several contacts with the 16S rRNA in the 70S ribosome. The chain is Large ribosomal subunit protein uL2 from Yersinia enterocolitica.